We begin with the raw amino-acid sequence, 462 residues long: Spermatogenesis- and oogenesis-specific basic helix-loop-helix-containing protein 2 (462 aa).

The 52-residue stretch at 200–251 (KASFLHSSKEKLRRERIKFCCEQLRTLLPYVKGRKSDVASVIEATVDYVKQV) folds into the bHLH domain. The tract at residues 422–462 (PASSRTASSSIFRGFRESDSGHQASQQPTGPSLQPQDSSYF) is disordered. Polar residues predominate over residues 442–462 (GHQASQQPTGPSLQPQDSSYF).

The protein resides in the nucleus. Its function is as follows. Probable transcription factor, which may be involved in spermatogenesis and oogenesis. This is Spermatogenesis- and oogenesis-specific basic helix-loop-helix-containing protein 2 (Sohlh2) from Rattus norvegicus (Rat).